We begin with the raw amino-acid sequence, 334 residues long: Trans-1,2-dihydrobenzene-1,2-diol dehydrogenase (334 aa).

It belongs to the Gfo/Idh/MocA family. As to quaternary structure, homodimer. In terms of tissue distribution, small intestine.

The enzyme catalyses (1R,2R)-1,2-dihydrobenzene-1,2-diol + NADP(+) = catechol + NADPH + H(+). It carries out the reaction D-xylose + NADP(+) = D-xylono-1,5-lactone + NADPH + H(+). In Homo sapiens (Human), this protein is Trans-1,2-dihydrobenzene-1,2-diol dehydrogenase (DHDH).